The following is a 178-amino-acid chain: Killin (178 aa).

A DNA-binding region spans residues 8 to 50; the sequence is SARPGRTVHVWGYRVEWKVRNGRKLQPSEWAGRGDLGGFKRRW.

It is found in the nucleus. DNA-binding protein involved in S phase checkpoint control-coupled apoptosis by mediating p53/TP53-induced apoptosis. Has the ability to inhibit DNA synthesis and S phase arrest coupled to apoptosis. Has affinity to both double- and single-stranded DNA. This chain is Killin (KLLN), found in Homo sapiens (Human).